The following is a 356-amino-acid chain: 3'-5' exonuclease (356 aa).

Positions 1-120 are disordered; it reads MDKYLIKMPT…TPSPEKEKPE (120 aa). Basic and acidic residues-rich tracts occupy residues 29–56 and 71–85; these read TIDKQKEKNTPTEKQKQEDDYVEKENTP and KNQDTPTEVKDIKNE. Low complexity predominate over residues 99-113; sequence LTRSTRSMAEEGTPS. Phosphoserine is present on residues Ser105 and Ser113. Residues 155–316 enclose the 3'-5' exonuclease domain; the sequence is TTLDVVPMAF…GQVIYRDLEQ (162 aa). The Mg(2+) site is built by Asp165, Glu167, and Asp303.

It belongs to the WRNexo family.

Its subcellular location is the nucleus. Its function is as follows. Has exonuclease activity on both single-stranded and duplex templates bearing overhangs, but not blunt ended duplex DNA, and cleaves in a 3'-5' direction. Essential for the formation of DNA replication focal centers. Has an important role in maintaining genome stability. The polypeptide is 3'-5' exonuclease (Drosophila willistoni (Fruit fly)).